The chain runs to 552 residues: Membrane protein insertase YidC (552 aa).

A helical transmembrane segment spans residues 3-23 (TKRLILFVIFSFSILMLWDSW). A disordered region spans residues 29 to 65 (PPAASQTQTTAQSVEDGSVPQAAKSSASAANQASVPA). Transmembrane regions (helical) follow at residues 359–379 (WGVA…PLSA), 429–449 (LPIL…LGSV), 463–483 (LSAV…MIIQ), and 503–523 (PIVF…YWLV).

The protein belongs to the OXA1/ALB3/YidC family. Type 1 subfamily. In terms of assembly, interacts with the Sec translocase complex via SecD. Specifically interacts with transmembrane segments of nascent integral membrane proteins during membrane integration.

It is found in the cell inner membrane. Required for the insertion and/or proper folding and/or complex formation of integral membrane proteins into the membrane. Involved in integration of membrane proteins that insert both dependently and independently of the Sec translocase complex, as well as at least some lipoproteins. Aids folding of multispanning membrane proteins. This chain is Membrane protein insertase YidC, found in Methylobacillus flagellatus (strain ATCC 51484 / DSM 6875 / VKM B-1610 / KT).